Reading from the N-terminus, the 111-residue chain is uncharacterized protein (111 aa).

The next 2 helical transmembrane spans lie at 45-65 (AFLI…LLVI) and 91-111 (LPAG…ILHI).

The protein resides in the cell membrane. This is an uncharacterized protein from Methanothermobacter thermautotrophicus (strain ATCC 29096 / DSM 1053 / JCM 10044 / NBRC 100330 / Delta H) (Methanobacterium thermoautotrophicum).